Reading from the N-terminus, the 214-residue chain is Peptide methionine sulfoxide reductase B1, chloroplastic (214 aa).

Residues 1–53 (MAMRQYAAATAASSSFRARPRARPSCLPAAALPLAPCCGVAWSRASYRRASVR) constitute a chloroplast transit peptide. The span at 58 to 81 (ASSSSSSSSSSPSPQGQAQAQAQG) shows a compositional bias: low complexity. Residues 58-91 (ASSSSSSSSSSPSPQGQAQAQAQGKPNYSTSLTD) form a disordered region. The MsrB domain maps to 91-213 (DEEWRKRLTK…NSASLKLKKT (123 aa)). Cys-130, Cys-133, Cys-179, and Cys-182 together coordinate Zn(2+). Cys-202 (nucleophile) is an active-site residue.

The protein belongs to the MsrB Met sulfoxide reductase family. The cofactor is Zn(2+). Expressed in leaves and flowers.

It is found in the plastid. Its subcellular location is the chloroplast. It catalyses the reaction L-methionyl-[protein] + [thioredoxin]-disulfide + H2O = L-methionyl-(R)-S-oxide-[protein] + [thioredoxin]-dithiol. In terms of biological role, catalyzes the reduction of methionine sulfoxide (MetSO) to methionine in proteins. Involved in abiotic stress response. Plays a protective role against oxidative stress by restoring activity to proteins that have been inactivated by methionine oxidation. MSRB family specifically reduces the MetSO R-enantiomer. This chain is Peptide methionine sulfoxide reductase B1, chloroplastic, found in Oryza sativa subsp. japonica (Rice).